The following is a 299-amino-acid chain: Nicotinate-nucleotide pyrophosphorylase [carboxylating] (299 aa).

Residues 8–12 (LLLPP) form an important for hexamer formation region. Quinolinate contacts are provided by residues R102, 138 to 139 (RK), 160 to 161 (HR), K171, E201, D222, 248 to 250 (SGG), and G270.

It belongs to the NadC/ModD family. As to quaternary structure, hexamer formed by 3 homodimers.

It catalyses the reaction nicotinate beta-D-ribonucleotide + CO2 + diphosphate = quinolinate + 5-phospho-alpha-D-ribose 1-diphosphate + 2 H(+). It functions in the pathway cofactor biosynthesis; NAD(+) biosynthesis; nicotinate D-ribonucleotide from quinolinate: step 1/1. In terms of biological role, involved in the catabolism of quinolinic acid (QA). The polypeptide is Nicotinate-nucleotide pyrophosphorylase [carboxylating] (Sus scrofa (Pig)).